Consider the following 592-residue polypeptide: Movement and RNA silencing protein VP6 (592 aa).

Residues 450-469 form a disordered region; sequence SSDEENADDPNQGWNGTPVH.

The protein localises to the host cell junction. It localises to the host plasmodesma. Transports viral genome to neighboring plant cells directly through plasmosdesmata, without any budding. The movement protein allows efficient cell to cell propagation, by bypassing the host cell wall barrier. Displays sequence non-specific nucleic acid binding activity. Acts as a suppressor of RNA-mediated gene silencing, also known as post-transcriptional gene silencing (PTGS), a mechanism of plant viral defense that limits the accumulation of viral RNAs. The chain is Movement and RNA silencing protein VP6 from Oryza latifolia (Indian wild rice).